We begin with the raw amino-acid sequence, 354 residues long: MQVYVDYRDVNSISNKKTLAYVNNFVINTTQFLNRFNYLCEQKLCDISNHLQKLEITMSLLEIKLGSIDGLESLPSSANVPVHNTQPTTQQNTPPPPTAAATTSSNIPPPPPPPPPPMTGVPPPPPPPPPPPISKSNIPPPPATQQNTQESDDDDEDNNNNDKNNNNRDDEDDDDETSSQAPPPPPMPTLPSSQSLMDNLAAVLAMKKQQRNPQPPQPQPQSPSPQPPPPPTTTSSIPVPPPPFSGANNNSDDDDDDDEGPSLSIPAPPSMMVMSGNNNSNSNSYSNNNNNKDDDDDDDDDDDDDDNSISIPKPPQMDDIMIPAPPTDLFIPAPPSIRNYDDADDDDDDDDESW.

The segment at 76–354 (SSANVPVHNT…DDDDDDDESW (279 aa)) is disordered. The segment covering 107–143 (IPPPPPPPPPPMTGVPPPPPPPPPPPISKSNIPPPPA) has biased composition (pro residues). The span at 150-159 (ESDDDDEDNN) shows a compositional bias: acidic residues. Residues 213-244 (PQPPQPQPQSPSPQPPPPPTTTSSIPVPPPPF) are compositionally biased toward pro residues. Residues 251–260 (SDDDDDDDEG) show a composition bias toward acidic residues. Low complexity predominate over residues 277–290 (NNNSNSNSYSNNNN). Acidic residues-rich tracts occupy residues 293–307 (DDDD…DDDN) and 342–354 (DADD…DESW).

The protein belongs to the CCDC53 family. Probable component of the WASH complex.

This chain is WASH complex subunit 3, found in Dictyostelium discoideum (Social amoeba).